We begin with the raw amino-acid sequence, 481 residues long: FAD-linked oxidoreductase afoF (481 aa).

Positions 1-16 (MRFLLQSITLVAAARA) are cleaved as a signal peptide. In terms of domain architecture, FAD-binding PCMH-type spans 52 to 227 (SEWRPPTWTG…TAATFKMFDQ (176 aa)). N-linked (GlcNAc...) asparagine glycosylation occurs at Asn-82. Position 92 is a pros-8alpha-FAD histidine (His-92). N-linked (GlcNAc...) asparagine glycans are attached at residues Asn-196, Asn-241, Asn-276, Asn-309, Asn-312, and Asn-376.

It belongs to the oxygen-dependent FAD-linked oxidoreductase family. Requires FAD as cofactor.

FAD-linked oxidoreductase; part of the gene cluster that mediates the biosynthesis of asperfuranone, a probable antitumor agent. The polyketide synthase afoG is responsible for producing the 3,5-dimethyloctadienone moiety from acetyl-CoA, three malonyl-CoA, and two S-adenosyl methionines (SAM). The 3,5-dimethyloctadienone moiety is then loaded onto the SAT domain of afoE and extended with four malonyl-CoA and one SAM, which leads to the formation of 2,4-dihydroxy-6-(5,7-dimethyl-2-oxo-trans-3-trans-5-nonadienyl)-3-methylbenzaldehyde (compound 2) after reductive release and aldol condensation. AfoD is the next enzyme in the biosynthesis sequence and hydroxylates the side chain at the benzylic position of compound 2. After benzylic hydroxylation, a furan ring is formed after five-member ring hemiacetal formation and water elimination. AfoF and afoC are proposed to oxidize the R-diketone proton and to reduce the unconjugated carbonyl group, respectively, to generate asperfuranone. Since no intermediates could be isolated from afoF and afoC deletants, the sequence of these two enzymes is not fully understood. Moreover, since afoC deletant still produces a small amount of asperfuranone, other endogenous oxidoreductases might catalyze the same reaction with much less efficiency. This chain is FAD-linked oxidoreductase afoF, found in Emericella nidulans (strain FGSC A4 / ATCC 38163 / CBS 112.46 / NRRL 194 / M139) (Aspergillus nidulans).